Here is a 444-residue protein sequence, read N- to C-terminus: Tubulin beta-4 chain (444 aa).

Residues Q11, E69, S138, G142, T143, G144, N204, and N226 each coordinate GTP. E69 contacts Mg(2+).

The protein belongs to the tubulin family. As to quaternary structure, dimer of alpha and beta chains. A typical microtubule is a hollow water-filled tube with an outer diameter of 25 nm and an inner diameter of 15 nM. Alpha-beta heterodimers associate head-to-tail to form protofilaments running lengthwise along the microtubule wall with the beta-tubulin subunit facing the microtubule plus end conferring a structural polarity. Microtubules usually have 13 protofilaments but different protofilament numbers can be found in some organisms and specialized cells. Requires Mg(2+) as cofactor.

It localises to the cytoplasm. The protein resides in the cytoskeleton. In terms of biological role, tubulin is the major constituent of microtubules, a cylinder consisting of laterally associated linear protofilaments composed of alpha- and beta-tubulin heterodimers. Microtubules grow by the addition of GTP-tubulin dimers to the microtubule end, where a stabilizing cap forms. Below the cap, tubulin dimers are in GDP-bound state, owing to GTPase activity of alpha-tubulin. The protein is Tubulin beta-4 chain (TUBB4) of Arabidopsis thaliana (Mouse-ear cress).